The following is a 724-amino-acid chain: Long-chain-fatty-acid--CoA ligase ACSBG1 (724 aa).

Residues 1 to 51 (MPRNSGAGYGCPHGDPSMLDSRETPQESRQDMTVGTTQEKLKTSSLTDRQP) form a disordered region. Over residues 20–30 (DSRETPQESRQ) the composition is skewed to basic and acidic residues. The span at 31 to 51 (DMTVGTTQEKLKTSSLTDRQP) shows a compositional bias: polar residues. Residues Ser53 and Ser56 each carry the phosphoserine modification. ATP is bound by residues 282 to 290 (TSGTTGNPK), 472 to 477 (AGYGLS), Asp550, and Arg565. Residue Tyr658 is modified to Phosphotyrosine. Position 701 (Lys701) interacts with ATP.

The protein belongs to the ATP-dependent AMP-binding enzyme family. Bubblegum subfamily.

The protein resides in the cytoplasm. It localises to the cytoplasmic vesicle. The protein localises to the microsome. It is found in the endoplasmic reticulum. Its subcellular location is the cell membrane. The catalysed reaction is a long-chain fatty acid + ATP + CoA = a long-chain fatty acyl-CoA + AMP + diphosphate. It catalyses the reaction (E)-hexadec-2-enoate + ATP + CoA = (2E)-hexadecenoyl-CoA + AMP + diphosphate. It carries out the reaction hexadecanoate + ATP + CoA = hexadecanoyl-CoA + AMP + diphosphate. Functionally, catalyzes the conversion of fatty acids such as long-chain and very long-chain fatty acids to their active form acyl-CoAs for both synthesis of cellular lipids, and degradation via beta-oxidation. Can activate diverse saturated, monosaturated and polyunsaturated fatty acids. The chain is Long-chain-fatty-acid--CoA ligase ACSBG1 from Macaca fascicularis (Crab-eating macaque).